The sequence spans 103 residues: N(4)-acetylcytidine amidohydrolase (103 aa).

Residues 6 to 101 (ITFFQRFQDD…QIQFYVIEFK (96 aa)) form the ASCH domain. Residue lysine 21 is the Proton acceptor of the active site. The active-site Nucleophile is the threonine 24. The active-site Proton donor is glutamate 74.

Belongs to the N(4)-acetylcytidine amidohydrolase family.

The catalysed reaction is N(4)-acetylcytidine + H2O = cytidine + acetate + H(+). The enzyme catalyses N(4)-acetyl-2'-deoxycytidine + H2O = 2'-deoxycytidine + acetate + H(+). It catalyses the reaction N(4)-acetylcytosine + H2O = cytosine + acetate + H(+). Catalyzes the hydrolysis of N(4)-acetylcytidine (ac4C). The protein is N(4)-acetylcytidine amidohydrolase (yqfB) of Escherichia coli (strain SMS-3-5 / SECEC).